The primary structure comprises 309 residues: Nucleotide-binding protein cgR_1639 (309 aa).

Position 32–39 (32–39 (GMSGAGLS)) interacts with ATP. 83–86 (DVRS) provides a ligand contact to GTP.

Belongs to the RapZ-like family.

In terms of biological role, displays ATPase and GTPase activities. This Corynebacterium glutamicum (strain R) protein is Nucleotide-binding protein cgR_1639.